The primary structure comprises 446 residues: Tol-Pal system protein TolB (446 aa).

A signal peptide spans 1-19; the sequence is MLLRYLFILFIIIPIKAFA.

The protein belongs to the TolB family. As to quaternary structure, the Tol-Pal system is composed of five core proteins: the inner membrane proteins TolA, TolQ and TolR, the periplasmic protein TolB and the outer membrane protein Pal. They form a network linking the inner and outer membranes and the peptidoglycan layer.

It localises to the periplasm. Its function is as follows. Part of the Tol-Pal system, which plays a role in outer membrane invagination during cell division and is important for maintaining outer membrane integrity. The polypeptide is Tol-Pal system protein TolB (Pelagibacter ubique (strain HTCC1062)).